The following is a 1021-amino-acid chain: Multidrug resistance protein MdtC (1021 aa).

Topologically, residues 1–6 (MKFFAL) are cytoplasmic. A helical membrane pass occupies residues 7–29 (FIYRPVATILLSVAITLCGILGF). Topologically, residues 30-335 (RMLPVAPLPQ…TIRASLEEVE (306 aa)) are periplasmic. A helical membrane pass occupies residues 336–353 (QTLIISVALVILVVFLFL). Over 354 to 359 (RSGRAT) the chain is Cytoplasmic. Residues 360-379 (IIPAVAVPVSLIGTFAAMYL) traverse the membrane as a helical segment. Over 380–388 (CGFSLNNLS) the chain is Periplasmic. The helical transmembrane segment at 389-411 (LMALTIATGFVVDDAIVVLENIA) threads the bilayer. Residues 412-430 (RHLEAGMKPLQAALQGTRE) are Cytoplasmic-facing. Residues 431 to 453 (VGFTVLSMSLSLVAVFLPLLLMG) traverse the membrane as a helical segment. Residues 454 to 467 (GLPGRLLREFAVTL) are Periplasmic-facing. Residues 468-490 (SVAIGISLLVSLTLTPMMCGWML) traverse the membrane as a helical segment. Residues 491–848 (KASKPREQKR…QVFQETMNSQ (358 aa)) are Cytoplasmic-facing. Residues 849-871 (VILIIAAIATVYIVLGILYESYV) traverse the membrane as a helical segment. Residues 872-890 (HPLTILSTLPSAGVGALLA) lie on the Periplasmic side of the membrane. A helical transmembrane segment spans residues 891–913 (LELFNAPFSLIALIGIMLLIGIV). The Cytoplasmic segment spans residues 914–943 (KKNAIMMVDFALEAQRHGNLTPQEAIFQAC). Residues 944–966 (LLRFRPIMMTTLAALFGALPLVL) traverse the membrane as a helical segment. Topologically, residues 967–980 (SGGDGSELRQPLEI) are periplasmic. The chain crosses the membrane as a helical span at residues 981–1003 (TIVGGLVMSQLLTLYTTPVVYLF). Residues 1004–1021 (FDRLRLRFSRKPKQTVTE) lie on the Cytoplasmic side of the membrane.

This sequence belongs to the resistance-nodulation-cell division (RND) (TC 2.A.6) family. MdtC subfamily. In terms of assembly, part of a tripartite efflux system composed of MdtA, MdtB and MdtC. MdtC forms a heteromultimer with MdtB.

It is found in the cell inner membrane. The polypeptide is Multidrug resistance protein MdtC (Shigella flexneri).